Consider the following 330-residue polypeptide: o-succinylbenzoate synthase (330 aa).

The active-site Proton donor is the lysine 130. Positions 155, 184, and 206 each coordinate Mg(2+). The Proton acceptor role is filled by lysine 228.

This sequence belongs to the mandelate racemase/muconate lactonizing enzyme family. MenC type 1 subfamily. As to quaternary structure, monomer. A divalent metal cation serves as cofactor.

It catalyses the reaction (1R,6R)-6-hydroxy-2-succinyl-cyclohexa-2,4-diene-1-carboxylate = 2-succinylbenzoate + H2O. Its pathway is quinol/quinone metabolism; 1,4-dihydroxy-2-naphthoate biosynthesis; 1,4-dihydroxy-2-naphthoate from chorismate: step 4/7. The protein operates within cofactor biosynthesis; phylloquinone biosynthesis. In terms of biological role, converts 2-succinyl-6-hydroxy-2,4-cyclohexadiene-1-carboxylate (SHCHC) to 2-succinylbenzoate (OSB). Does not show N-succinylamino acid racemase (NSAR) activity with N-succinyl-L-phenylglycine as substrate. This Bdellovibrio bacteriovorus (strain ATCC 15356 / DSM 50701 / NCIMB 9529 / HD100) protein is o-succinylbenzoate synthase.